The chain runs to 307 residues: UDP-N-acetylenolpyruvoylglucosamine reductase (307 aa).

The 167-residue stretch at 27 to 193 folds into the FAD-binding PCMH-type domain; sequence RVGGPADVVF…LDAVFEGLAD (167 aa). R172 is a catalytic residue. S222 (proton donor) is an active-site residue. The active site involves E299.

It belongs to the MurB family. The cofactor is FAD.

Its subcellular location is the cytoplasm. The catalysed reaction is UDP-N-acetyl-alpha-D-muramate + NADP(+) = UDP-N-acetyl-3-O-(1-carboxyvinyl)-alpha-D-glucosamine + NADPH + H(+). Its pathway is cell wall biogenesis; peptidoglycan biosynthesis. Functionally, cell wall formation. This is UDP-N-acetylenolpyruvoylglucosamine reductase from Caulobacter sp. (strain K31).